The sequence spans 251 residues: Probable transcriptional regulatory protein Franean1_5147 (251 aa).

The protein belongs to the TACO1 family.

Its subcellular location is the cytoplasm. The sequence is that of Probable transcriptional regulatory protein Franean1_5147 from Parafrankia sp. (strain EAN1pec).